The chain runs to 667 residues: MAGMKTASGDYIDSSWELRVFVGEEDPEAESVTLRVTGESHIGGVLLKIVEQINRKQDWSDHAIWWEQKRQWLLQTHWTLDKYGILADARLFFGPQHRPVILRLPNRRALRLRASFSQPLFQAVAAICRLLSIRHPEELSLLRAPEKKEKKKKEKEPEEELYDLSKVVLAGGVAPALFRGMPAHFSDSAQTEACYHMLSRPQPPPDPLLLQRLPRPSSLSDKTQLHSRWLDSSRCLMQQGIKAGDALWLRFKYYSFFDLDPKTDPVRLTQLYEQARWDLLLEEIDCTEEEMMVFAALQYHINKLSQSGEVGEPAGTDPGLDDLDVALSNLEVKLEGSAPTDVLDSLTTIPELKDHLRIFRIPRRPRKLTLKGYRQHWVVFKETTLSYYKSQDEAPGDPIQQLNLKGCEVVPDVNVSGQKFCIKLLVPSPEGMSEIYLRCQDEQQYARWMAGCRLASKGRTMADSSYTSEVQAILAFLSLQRTGSGGPGNHPHGPDASAEGLNPYGLVAPRFQRKFKAKQLTPRILEAHQNVAQLSLAEAQLRFIQAWQSLPDFGISYVMVRFKGSRKDEILGIANNRLIRIDLAVGDVVKTWRFSNMRQWNVNWDIRQVAIEFDEHINVAFSCVSASCRIVHEYIGGYIFLSTRERARGEELDEDLFLQLTGGHEAF.

S8 carries the phosphoserine modification. Phosphotyrosine is present on Y11. Residues 229 to 558 (WLDSSRCLMQ…SLPDFGISYV (330 aa)) form the FERM domain. The PH domain occupies 354-457 (DHLRIFRIPR…WMAGCRLASK (104 aa)). Y504 carries the post-translational modification Phosphotyrosine. T591 is subject to Phosphothreonine.

It belongs to the kindlin family. Interacts with ITGB1, ITGB2 and ITGB3 (via cytoplasmic tails). As to expression, highly expressed in lymph node. Expressed in thymus, spleen and leukocytes. Weakly expressed in placenta, small intestine, stomach, testis and lung. Overexpressed in B-cell malignancies.

It localises to the cell projection. The protein localises to the podosome. Plays a central role in cell adhesion in hematopoietic cells. Acts by activating the integrin beta-1-3 (ITGB1, ITGB2 and ITGB3). Required for integrin-mediated platelet adhesion and leukocyte adhesion to endothelial cells. Required for activation of integrin beta-2 (ITGB2) in polymorphonuclear granulocytes (PMNs). Functionally, isoform 2 may act as a repressor of NF-kappa-B and apoptosis. This is Fermitin family homolog 3 (FERMT3) from Homo sapiens (Human).